Reading from the N-terminus, the 219-residue chain is Response regulator ArlR (219 aa).

A Response regulatory domain is found at 3–116; the sequence is NILIVEDEQN…ELFARIRAVL (114 aa). 4-aspartylphosphate is present on Asp-52. A DNA-binding region (ompR/PhoB-type) is located at residues 122 to 219; that stretch reads KDIIDINGIK…TVRGVGYVIR (98 aa).

In terms of processing, phosphorylated by ArlS.

The protein resides in the cytoplasm. In terms of biological role, member of the two-component regulatory system ArlS/ArlR. This is Response regulator ArlR (arlR) from Staphylococcus haemolyticus (strain JCSC1435).